A 162-amino-acid chain; its full sequence is Disulfide bond formation protein B (162 aa).

The Cytoplasmic segment spans residues 1–10; sequence MGDWLLRRRG. A helical transmembrane segment spans residues 11–27; that stretch reads LALLLVLTLLLNLGALG. The Periplasmic portion of the chain corresponds to 28–45; sequence LEYLADMPPCPLCWVQRG. Cysteine 37 and cysteine 40 are disulfide-bonded. The chain crosses the membrane as a helical span at residues 46–62; sequence VFGLMSLVALVGLVYFP. At 63–68 the chain is on the cytoplasmic side; sequence RGWGRW. The helical transmembrane segment at 69–86 threads the bilayer; the sequence is PLAGALGLSALTGVIIAL. Residues 87-140 are Periplasmic-facing; it reads RHLYIQANPDAVSCGMSPEVLAQFLPWWEVLLEILSGTTDCTQVDAVLGVPLPG. Residues cysteine 100 and cysteine 127 are joined by a disulfide bond. The chain crosses the membrane as a helical span at residues 141–159; the sequence is WTLVGYLALGALGLYAVLA. At 160-162 the chain is on the cytoplasmic side; it reads RRA.

It belongs to the DsbB family.

The protein localises to the cell inner membrane. Required for disulfide bond formation in some periplasmic proteins. Acts by oxidizing the DsbA protein. The chain is Disulfide bond formation protein B from Alkalilimnicola ehrlichii (strain ATCC BAA-1101 / DSM 17681 / MLHE-1).